The sequence spans 89 residues: U1-hexatoxin-Iw1e (89 aa).

Positions 1-18 (MLKFVVLIFVVIMASTFA) are cleaved as a signal peptide. 5 disulfide bridges follow: Cys-21-Cys-32, Cys-26-Cys-40, Cys-31-Cys-66, Cys-50-Cys-74, and Cys-68-Cys-81. The propeptide occupies 87–89 (RSE).

It belongs to the MIT-like AcTx family. Expressed by the venom gland.

It is found in the secreted. The sequence is that of U1-hexatoxin-Iw1e from Illawarra wisharti (Illawarra funnel-web spider).